The chain runs to 156 residues: D-aminoacyl-tRNA deacylase (156 aa).

The short motif at 142–143 (GP) is the Gly-cisPro motif, important for rejection of L-amino acids element.

This sequence belongs to the DTD family. In terms of assembly, homodimer.

Its subcellular location is the cytoplasm. The enzyme catalyses glycyl-tRNA(Ala) + H2O = tRNA(Ala) + glycine + H(+). The catalysed reaction is a D-aminoacyl-tRNA + H2O = a tRNA + a D-alpha-amino acid + H(+). Its function is as follows. An aminoacyl-tRNA editing enzyme that deacylates mischarged D-aminoacyl-tRNAs. Also deacylates mischarged glycyl-tRNA(Ala), protecting cells against glycine mischarging by AlaRS. Acts via tRNA-based rather than protein-based catalysis; rejects L-amino acids rather than detecting D-amino acids in the active site. By recycling D-aminoacyl-tRNA to D-amino acids and free tRNA molecules, this enzyme counteracts the toxicity associated with the formation of D-aminoacyl-tRNA entities in vivo and helps enforce protein L-homochirality. The sequence is that of D-aminoacyl-tRNA deacylase from Delftia acidovorans (strain DSM 14801 / SPH-1).